The primary structure comprises 346 residues: Small ribosomal subunit biogenesis GTPase RsgA (346 aa).

Residues 1–26 (MAKRKLTQNQTRRIQSNNAKTLHRHK) are disordered. A compositionally biased stretch (polar residues) spans 7–20 (TQNQTRRIQSNNAK). Positions 103–271 (ENEISRPDYY…LIDSPGIREF (169 aa)) constitute a CP-type G domain. GTP is bound by residues 159-162 (NKVD) and 213-221 (GQSGVGKSS). Zn(2+)-binding residues include Cys295, Cys300, His302, and Cys308.

This sequence belongs to the TRAFAC class YlqF/YawG GTPase family. RsgA subfamily. As to quaternary structure, monomer. Associates with 30S ribosomal subunit, binds 16S rRNA. It depends on Zn(2+) as a cofactor.

Its subcellular location is the cytoplasm. In terms of biological role, one of several proteins that assist in the late maturation steps of the functional core of the 30S ribosomal subunit. Helps release RbfA from mature subunits. May play a role in the assembly of ribosomal proteins into the subunit. Circularly permuted GTPase that catalyzes slow GTP hydrolysis, GTPase activity is stimulated by the 30S ribosomal subunit. The sequence is that of Small ribosomal subunit biogenesis GTPase RsgA from Haemophilus influenzae (strain PittEE).